We begin with the raw amino-acid sequence, 708 residues long: Elongation factor G (708 aa).

A tr-type G domain is found at 8-290 (KRYRNIGISA…AVIQYLPAPM (283 aa)). Residues 17-24 (AHIDAGKT), 88-92 (DTPGH), and 142-145 (NKMD) contribute to the GTP site.

The protein belongs to the TRAFAC class translation factor GTPase superfamily. Classic translation factor GTPase family. EF-G/EF-2 subfamily.

Its subcellular location is the cytoplasm. In terms of biological role, catalyzes the GTP-dependent ribosomal translocation step during translation elongation. During this step, the ribosome changes from the pre-translocational (PRE) to the post-translocational (POST) state as the newly formed A-site-bound peptidyl-tRNA and P-site-bound deacylated tRNA move to the P and E sites, respectively. Catalyzes the coordinated movement of the two tRNA molecules, the mRNA and conformational changes in the ribosome. This is Elongation factor G from Psychrobacter arcticus (strain DSM 17307 / VKM B-2377 / 273-4).